The following is a 203-amino-acid chain: Histidine biosynthesis bifunctional protein HisIE (203 aa).

Residues 1 to 114 (MLTEQQRREL…FGDTAHQWLF (114 aa)) are phosphoribosyl-AMP cyclohydrolase. Positions 115-203 (LYQLEQLLAE…VIENLRKRHQ (89 aa)) are phosphoribosyl-ATP pyrophosphohydrolase.

The protein in the N-terminal section; belongs to the PRA-CH family. In the C-terminal section; belongs to the PRA-PH family.

It localises to the cytoplasm. It carries out the reaction 1-(5-phospho-beta-D-ribosyl)-ATP + H2O = 1-(5-phospho-beta-D-ribosyl)-5'-AMP + diphosphate + H(+). The enzyme catalyses 1-(5-phospho-beta-D-ribosyl)-5'-AMP + H2O = 1-(5-phospho-beta-D-ribosyl)-5-[(5-phospho-beta-D-ribosylamino)methylideneamino]imidazole-4-carboxamide. The protein operates within amino-acid biosynthesis; L-histidine biosynthesis; L-histidine from 5-phospho-alpha-D-ribose 1-diphosphate: step 2/9. It participates in amino-acid biosynthesis; L-histidine biosynthesis; L-histidine from 5-phospho-alpha-D-ribose 1-diphosphate: step 3/9. The polypeptide is Histidine biosynthesis bifunctional protein HisIE (Escherichia coli O6:H1 (strain CFT073 / ATCC 700928 / UPEC)).